Consider the following 525-residue polypeptide: Coronin-2A (525 aa).

7 WD repeats span residues 24 to 71 (NCYD…TGKL), 72 to 122 (DPHY…RNLT), 123 to 170 (AYRK…SVIT), 171 to 214 (SPMS…AGTV), 215 to 259 (LQEA…DNLS), 260 to 305 (VPLM…ADKP), and 306 to 342 (HLSY…RFYK). Residues 485–524 (QMFYRQQEEIRRLRELLTQREVQAKQLELEIKNLRMGSEQ) are a coiled coil.

It belongs to the WD repeat coronin family. As to quaternary structure, binds actin. Component of the N-Cor repressor complex, at least composed of NCOR1, NCOR2, HDAC3, TBL1X, TBL1R, CORO2A and GPS2.

This chain is Coronin-2A (CORO2A), found in Homo sapiens (Human).